A 102-amino-acid polypeptide reads, in one-letter code: Small ribosomal subunit protein uS10 (102 aa).

It belongs to the universal ribosomal protein uS10 family. As to quaternary structure, part of the 30S ribosomal subunit.

Functionally, involved in the binding of tRNA to the ribosomes. The protein is Small ribosomal subunit protein uS10 of Frankia alni (strain DSM 45986 / CECT 9034 / ACN14a).